The sequence spans 341 residues: tRNA-specific 2-thiouridylase MnmA (341 aa).

ATP is bound by residues 8-15 and Met34; that span reads GMSGGVDS. The active-site Nucleophile is the Cys94. Cys94 and Cys188 are disulfide-bonded. ATP is bound at residue Gly118. The segment at 136-138 is interaction with tRNA; it reads KDQ. Cys188 acts as the Cysteine persulfide intermediate in catalysis. Positions 290 to 291 are interaction with tRNA; the sequence is RY.

Belongs to the MnmA/TRMU family.

Its subcellular location is the cytoplasm. The catalysed reaction is S-sulfanyl-L-cysteinyl-[protein] + uridine(34) in tRNA + AH2 + ATP = 2-thiouridine(34) in tRNA + L-cysteinyl-[protein] + A + AMP + diphosphate + H(+). In terms of biological role, catalyzes the 2-thiolation of uridine at the wobble position (U34) of tRNA, leading to the formation of s(2)U34. The polypeptide is tRNA-specific 2-thiouridylase MnmA (Sulfurimonas denitrificans (strain ATCC 33889 / DSM 1251) (Thiomicrospira denitrificans (strain ATCC 33889 / DSM 1251))).